The following is a 465-amino-acid chain: Cysteine--tRNA ligase (465 aa).

Position 27 (Cys27) interacts with Zn(2+). A 'HIGH' region motif is present at residues 29-39 (PTVYDDAHLGH). Zn(2+) is bound by residues Cys207, His237, and Glu241. The 'KMSKS' region motif lies at 269–273 (KMSKS). An ATP-binding site is contributed by Lys272.

The protein belongs to the class-I aminoacyl-tRNA synthetase family. As to quaternary structure, monomer. Zn(2+) serves as cofactor.

The protein localises to the cytoplasm. It catalyses the reaction tRNA(Cys) + L-cysteine + ATP = L-cysteinyl-tRNA(Cys) + AMP + diphosphate. The chain is Cysteine--tRNA ligase from Helicobacter pylori (strain Shi470).